Here is a 248-residue protein sequence, read N- to C-terminus: 3-deoxy-manno-octulosonate cytidylyltransferase (248 aa).

It belongs to the KdsB family.

The protein resides in the cytoplasm. It catalyses the reaction 3-deoxy-alpha-D-manno-oct-2-ulosonate + CTP = CMP-3-deoxy-beta-D-manno-octulosonate + diphosphate. Its pathway is nucleotide-sugar biosynthesis; CMP-3-deoxy-D-manno-octulosonate biosynthesis; CMP-3-deoxy-D-manno-octulosonate from 3-deoxy-D-manno-octulosonate and CTP: step 1/1. It functions in the pathway bacterial outer membrane biogenesis; lipopolysaccharide biosynthesis. In terms of biological role, activates KDO (a required 8-carbon sugar) for incorporation into bacterial lipopolysaccharide in Gram-negative bacteria. This Escherichia coli (strain K12 / MC4100 / BW2952) protein is 3-deoxy-manno-octulosonate cytidylyltransferase.